The primary structure comprises 229 residues: Transcriptional activator protein YukR (229 aa).

In terms of domain architecture, HTH luxR-type spans 157–222 (DTSGKGILSP…QAIRLGVELE (66 aa)). The segment at residues 181 to 200 (YPEIALIAGITTRTVKHHMG) is a DNA-binding region (H-T-H motif).

This sequence belongs to the autoinducer-regulated transcriptional regulatory protein family.

Its function is as follows. Probable transcriptional activator. Binds to an autoinducer molecule. The sequence is that of Transcriptional activator protein YukR (yukR) from Yersinia ruckeri.